Reading from the N-terminus, the 177-residue chain is Meiotic chromosome segregation protein C17A2.07c (177 aa).

Residues 71–90 (EDDSINKPTEEADEAPRTQL) are disordered. Positions 74–86 (SINKPTEEADEAP) are enriched in basic and acidic residues.

It is found in the nucleus. Functionally, involved in meiotic chromosome segregation. This Schizosaccharomyces pombe (strain 972 / ATCC 24843) (Fission yeast) protein is Meiotic chromosome segregation protein C17A2.07c.